The following is a 401-amino-acid chain: Phosphoglycerate kinase (401 aa).

Substrate is bound by residues 29–31 (DFN), R45, 69–72 (HLGR), R125, and R158. Residues K209, E331, and 357–360 (GGDT) contribute to the ATP site.

The protein belongs to the phosphoglycerate kinase family. Monomer.

The protein localises to the cytoplasm. The enzyme catalyses (2R)-3-phosphoglycerate + ATP = (2R)-3-phospho-glyceroyl phosphate + ADP. Its pathway is carbohydrate degradation; glycolysis; pyruvate from D-glyceraldehyde 3-phosphate: step 2/5. This Wolinella succinogenes (strain ATCC 29543 / DSM 1740 / CCUG 13145 / JCM 31913 / LMG 7466 / NCTC 11488 / FDC 602W) (Vibrio succinogenes) protein is Phosphoglycerate kinase.